The following is a 359-amino-acid chain: Spermine synthase (359 aa).

Residues 53–304 (SGWFSEPHPR…GVIGFVLCST (252 aa)) form the PABS domain. Gln99 contributes to the S-adenosyl 3-(methylsulfanyl)propylamine binding site. Tyr129 provides a ligand contact to spermidine. Gln130 lines the S-adenosyl 3-(methylsulfanyl)propylamine pocket. Residue Asp154 coordinates spermidine. S-adenosyl 3-(methylsulfanyl)propylamine contacts are provided by residues Glu174 and 205 to 206 (DA). Asp224 serves as the catalytic Proton acceptor. A putrescine-binding site is contributed by Tyr292.

This sequence belongs to the spermidine/spermine synthase family. Heterodimer. Component of a multiprotein complex. Interacts with SPDSYN1 and SPDSYN2. In terms of tissue distribution, expressed predominantly in stem internodes, flower buds and roots.

It catalyses the reaction S-adenosyl 3-(methylsulfanyl)propylamine + spermidine = spermine + S-methyl-5'-thioadenosine + H(+). It functions in the pathway amine and polyamine biosynthesis; spermine biosynthesis; spermine from spermidine: step 1/1. This is Spermine synthase (SPMS) from Arabidopsis thaliana (Mouse-ear cress).